The sequence spans 575 residues: Carboxylesterase 5A (575 aa).

The first 27 residues, 1–27, serve as a signal peptide directing secretion; it reads MSGEWGHLGQTLIWAVWVLAAATEGPA. N-linked (GlcNAc...) asparagine glycosylation occurs at Asn82. Cys94 and Cys121 form a disulfide bridge. Catalysis depends on Ser226, which acts as the Acyl-ester intermediate. The cysteines at positions 280 and 291 are disulfide-linked. Asn281 carries N-linked (GlcNAc...) asparagine glycosylation. The Charge relay system role is filled by Glu345. N-linked (GlcNAc...) asparagine glycosylation occurs at Asn363. Catalysis depends on His454, which acts as the Charge relay system. Residue Asn524 is glycosylated (N-linked (GlcNAc...) asparagine).

The protein belongs to the type-B carboxylesterase/lipase family. In terms of processing, N-glycosylated.

The protein localises to the secreted. It carries out the reaction a carboxylic ester + H2O = an alcohol + a carboxylate + H(+). Involved in the detoxification of xenobiotics and in the activation of ester and amide prodrugs. The sequence is that of Carboxylesterase 5A (CES5A) from Canis lupus familiaris (Dog).